The following is a 65-amino-acid chain: Disintegrin CC8B (65 aa).

In terms of domain architecture, Disintegrin spans 1-65 (NSAHPCCDPV…DCPRNPWHKS (65 aa)). Intrachain disulfides connect C6–C29, C20–C26, C25–C50, and C38–C57. The Cell attachment site; atypical (WGD) motif lies at 42 to 44 (WGD).

The protein belongs to the disintegrin family. Dimeric disintegrin subfamily. In terms of assembly, heterodimer with CC8A; disulfide-linked. As to expression, expressed by the venom gland.

The protein localises to the secreted. Its function is as follows. Inhibits integrins alpha-IIb/beta-3 (ITGA2B/ITGB3), alpha-V/beta-3 (ITGAV/ITGB3), and alpha-5/beta-1 (ITGA5/ITGB1). The protein is Disintegrin CC8B of Cerastes cerastes (Horned desert viper).